Consider the following 49-residue polypeptide: uncharacterized protein (49 aa).

The N-terminal stretch at 1–22 (MVFLLFLSFVLSSIFLVPLVYM) is a signal peptide.

It is found in the secreted. This is an uncharacterized protein from Dictyostelium discoideum (Social amoeba).